We begin with the raw amino-acid sequence, 694 residues long: Elongation factor G (694 aa).

In terms of domain architecture, tr-type G spans 10–285; it reads EKTRNIGIMA…GVVDYLPSPL (276 aa). Residues 19–26, 83–87, and 137–140 contribute to the GTP site; these read AHIDAGKT, DTPGH, and NKMD.

It belongs to the TRAFAC class translation factor GTPase superfamily. Classic translation factor GTPase family. EF-G/EF-2 subfamily.

It is found in the cytoplasm. Functionally, catalyzes the GTP-dependent ribosomal translocation step during translation elongation. During this step, the ribosome changes from the pre-translocational (PRE) to the post-translocational (POST) state as the newly formed A-site-bound peptidyl-tRNA and P-site-bound deacylated tRNA move to the P and E sites, respectively. Catalyzes the coordinated movement of the two tRNA molecules, the mRNA and conformational changes in the ribosome. This Lactobacillus delbrueckii subsp. bulgaricus (strain ATCC BAA-365 / Lb-18) protein is Elongation factor G.